The chain runs to 152 residues: Transcriptional regulator MraZ (152 aa).

2 SpoVT-AbrB domains span residues 5–52 (ASAI…PIHE) and 81–124 (AHEV…DEQS).

This sequence belongs to the MraZ family. In terms of assembly, forms oligomers.

The protein resides in the cytoplasm. It localises to the nucleoid. The polypeptide is Transcriptional regulator MraZ (Shewanella baltica (strain OS155 / ATCC BAA-1091)).